The sequence spans 116 residues: NADH dehydrogenase [ubiquinone] iron-sulfur protein 6, mitochondrial (116 aa).

The N-terminal 20 residues, 1–20, are a transit peptide targeting the mitochondrion; that stretch reads MAAVLTFRRLLTLPRAARGF. Residues lysine 90 and lysine 112 each carry the N6-acetyllysine modification.

It belongs to the complex I NDUFS6 subunit family. In terms of assembly, mammalian complex I is composed of 45 different subunits. This is a component of the iron-sulfur (IP) fragment of the enzyme.

It localises to the mitochondrion inner membrane. Accessory subunit of the mitochondrial membrane respiratory chain NADH dehydrogenase (Complex I), that is believed not to be involved in catalysis. Complex I functions in the transfer of electrons from NADH to the respiratory chain. The immediate electron acceptor for the enzyme is believed to be ubiquinone. In Mus musculus (Mouse), this protein is NADH dehydrogenase [ubiquinone] iron-sulfur protein 6, mitochondrial (Ndufs6).